Reading from the N-terminus, the 418-residue chain is MSQTPPSFIRLLNNTSLVSQILIGMIVGILLATLIPSAAQSAGLLGTLFVGALKAVAPVLVLLLVTDSIAGHKQGQKTSIRPLLILYLFGTFCAAVVAVVASFAFPSVLHLSAQNADIVPPGGIAEVLNTLLFNVVANPVKALLEGNYIGILAWAIALGLSLRKASDTTKAVIHDLSHAVSGIVKGVIRCAPLGIMGLVASTFAETGFSALLSYAQLLIVLIGCMLFVAFVVNPLIVFWKIKRNPYPLVLMCLKESGVTAFFTRSSAANIPVNMALCEKLRLPEETYAVSIPLGATINMAGAAITITVLSMAAVNTLGISVDLATAVLLSVVATISACGASGVAGGSLLLIPLACSLFGISNDVAMQVVAVGFIIGVLQDSAETALNSSTDVLFTAAACMAEDGSLSEGNLQEDADIV.

A run of 9 helical transmembrane segments spans residues 16–36 (SLVSQILIGMIVGILLATLIP), 45–65 (LGTLFVGALKAVAPVLVLLLV), 83–103 (LLILYLFGTFCAAVVAVVASF), 142–162 (ALLEGNYIGILAWAIALGLSL), 192–212 (PLGIMGLVASTFAETGFSALL), 218–238 (LIVLIGCMLFVAFVVNPLIVF), 289–309 (VSIPLGATINMAGAAITITVL), 317–337 (LGISVDLATAVLLSVVATISA), and 364–384 (VAMQVVAVGFIIGVLQDSAET).

Belongs to the dicarboxylate/amino acid:cation symporter (DAACS) (TC 2.A.23) family.

The protein resides in the cell inner membrane. It catalyses the reaction L-serine(in) + Na(+)(in) = L-serine(out) + Na(+)(out). It carries out the reaction L-threonine(in) + Na(+)(in) = L-threonine(out) + Na(+)(out). Functionally, involved in the import of serine and threonine into the cell, with the concomitant import of sodium (symport system). The polypeptide is Serine/threonine transporter SstT (Tolumonas auensis (strain DSM 9187 / NBRC 110442 / TA 4)).